A 277-amino-acid polypeptide reads, in one-letter code: 3-methyl-2-oxobutanoate hydroxymethyltransferase (277 aa).

Asp54 and Asp93 together coordinate Mg(2+). 3-methyl-2-oxobutanoate-binding positions include 54–55 (DS), Asp93, and Lys122. Mg(2+) is bound at residue Glu124. The active-site Proton acceptor is Glu191.

Belongs to the PanB family. In terms of assembly, homodecamer; pentamer of dimers. Requires Mg(2+) as cofactor.

Its subcellular location is the cytoplasm. The catalysed reaction is 3-methyl-2-oxobutanoate + (6R)-5,10-methylene-5,6,7,8-tetrahydrofolate + H2O = 2-dehydropantoate + (6S)-5,6,7,8-tetrahydrofolate. The protein operates within cofactor biosynthesis; (R)-pantothenate biosynthesis; (R)-pantoate from 3-methyl-2-oxobutanoate: step 1/2. Functionally, catalyzes the reversible reaction in which hydroxymethyl group from 5,10-methylenetetrahydrofolate is transferred onto alpha-ketoisovalerate to form ketopantoate. The sequence is that of 3-methyl-2-oxobutanoate hydroxymethyltransferase from Alkalilimnicola ehrlichii (strain ATCC BAA-1101 / DSM 17681 / MLHE-1).